A 212-amino-acid chain; its full sequence is Uridine kinase (212 aa).

13–20 (GGSGSGKT) lines the ATP pocket.

Belongs to the uridine kinase family.

Its subcellular location is the cytoplasm. The enzyme catalyses uridine + ATP = UMP + ADP + H(+). The catalysed reaction is cytidine + ATP = CMP + ADP + H(+). It functions in the pathway pyrimidine metabolism; CTP biosynthesis via salvage pathway; CTP from cytidine: step 1/3. Its pathway is pyrimidine metabolism; UMP biosynthesis via salvage pathway; UMP from uridine: step 1/1. In Bacillus anthracis (strain A0248), this protein is Uridine kinase.